The chain runs to 434 residues: Putative nuclease OPG089 (434 aa).

Residues Asp-33, Asp-74, Glu-168, Asp-170, Asp-196, and Asp-198 each contribute to the Mg(2+) site.

It belongs to the XPG/RAD2 endonuclease family. FEN1 subfamily. Mg(2+) is required as a cofactor.

The protein resides in the virion. Putative nuclease that seems to be required for double-strand break repair, homologous recombination, and production of full-length viral genomic DNA. This is Putative nuclease OPG089 (OPG089) from Vaccinia virus (strain Western Reserve) (VACV).